We begin with the raw amino-acid sequence, 79 residues long: Darcynin (79 aa).

This sequence belongs to the darcynin family.

This chain is Darcynin, found in Chromobacterium violaceum (strain ATCC 12472 / DSM 30191 / JCM 1249 / CCUG 213 / NBRC 12614 / NCIMB 9131 / NCTC 9757 / MK).